The following is a 614-amino-acid chain: DNA-directed DNA polymerase (614 aa).

This sequence belongs to the DNA polymerase type-A family.

The enzyme catalyses DNA(n) + a 2'-deoxyribonucleoside 5'-triphosphate = DNA(n+1) + diphosphate. Its function is as follows. Replicates viral genomic DNA. This polymerase possesses two enzymatic activities: DNA synthesis (polymerase) and an exonucleolytic activity that degrades single-stranded DNA in the 3'-5' direction. The sequence is that of DNA-directed DNA polymerase from Escherichia coli (Escherichia coli phage phi32).